The following is a 184-amino-acid chain: Probable maltose O-acetyltransferase (184 aa).

Asn-84 contributes to the acetyl-CoA binding site. The active-site Proton donor/acceptor is the His-114. Acetyl-CoA is bound by residues Gly-141, Ser-159, 164–165 (TK), Arg-179, and Lys-182.

It belongs to the transferase hexapeptide repeat family. Homodimer.

It catalyses the reaction D-maltose + acetyl-CoA = 1-O-acetylmaltose + CoA. Its function is as follows. Catalyzes the CoA-dependent transfer of an acetyl group to maltose and other sugars. Acetylates glucose exclusively at the C6 position and maltose at the C6 position of the non-reducing end glucosyl moiety. Is able to acetylate maltooligosaccharides. The chain is Probable maltose O-acetyltransferase (maa) from Bacillus subtilis (strain 168).